A 384-amino-acid chain; its full sequence is Putative spore germination protein YfkR (384 aa).

The signal sequence occupies residues 1–20; that stretch reads MKKTIYKCVLPLLICILLTG. The N-palmitoyl cysteine moiety is linked to residue cysteine 21. Cysteine 21 carries the S-diacylglycerol cysteine lipid modification.

This sequence belongs to the GerABKC lipoprotein family.

The protein localises to the cell membrane. Functionally, may be involved in spore germination. This Bacillus subtilis (strain 168) protein is Putative spore germination protein YfkR (yfkR).